The chain runs to 401 residues: Glutamyl-tRNA reductase (401 aa).

Substrate-binding positions include 45–48 (TCNR), Ser101, 106–108 (EDQ), and Gln112. The active-site Nucleophile is the Cys46. 177 to 182 (GYGEVG) contacts NADP(+).

The protein belongs to the glutamyl-tRNA reductase family. As to quaternary structure, homodimer.

The catalysed reaction is (S)-4-amino-5-oxopentanoate + tRNA(Glu) + NADP(+) = L-glutamyl-tRNA(Glu) + NADPH + H(+). It participates in porphyrin-containing compound metabolism; protoporphyrin-IX biosynthesis; 5-aminolevulinate from L-glutamyl-tRNA(Glu): step 1/2. Its function is as follows. Catalyzes the NADPH-dependent reduction of glutamyl-tRNA(Glu) to glutamate 1-semialdehyde (GSA). The polypeptide is Glutamyl-tRNA reductase (Clostridium beijerinckii (strain ATCC 51743 / NCIMB 8052) (Clostridium acetobutylicum)).